A 192-amino-acid polypeptide reads, in one-letter code: Imidazole glycerol phosphate synthase subunit HisH (192 aa).

The Glutamine amidotransferase type-1 domain maps to 1 to 192 (MIAIIDYGLG…QALKGGFIND (192 aa)). Cys77 (nucleophile) is an active-site residue. Catalysis depends on residues His169 and Glu171.

As to quaternary structure, heterodimer of HisH and HisF.

The protein resides in the cytoplasm. The enzyme catalyses 5-[(5-phospho-1-deoxy-D-ribulos-1-ylimino)methylamino]-1-(5-phospho-beta-D-ribosyl)imidazole-4-carboxamide + L-glutamine = D-erythro-1-(imidazol-4-yl)glycerol 3-phosphate + 5-amino-1-(5-phospho-beta-D-ribosyl)imidazole-4-carboxamide + L-glutamate + H(+). It catalyses the reaction L-glutamine + H2O = L-glutamate + NH4(+). It participates in amino-acid biosynthesis; L-histidine biosynthesis; L-histidine from 5-phospho-alpha-D-ribose 1-diphosphate: step 5/9. Its function is as follows. IGPS catalyzes the conversion of PRFAR and glutamine to IGP, AICAR and glutamate. The HisH subunit catalyzes the hydrolysis of glutamine to glutamate and ammonia as part of the synthesis of IGP and AICAR. The resulting ammonia molecule is channeled to the active site of HisF. This is Imidazole glycerol phosphate synthase subunit HisH from Staphylococcus epidermidis (strain ATCC 12228 / FDA PCI 1200).